The following is a 267-amino-acid chain: Phosphate import ATP-binding protein PstB 2 (267 aa).

Positions 21 to 262 (LATKDLHVYY…AQCQSTNDYV (242 aa)) constitute an ABC transporter domain. 53–60 (GPSGCGKS) is a binding site for ATP.

The protein belongs to the ABC transporter superfamily. Phosphate importer (TC 3.A.1.7) family. The complex is composed of two ATP-binding proteins (PstB), two transmembrane proteins (PstC and PstA) and a solute-binding protein (PstS).

Its subcellular location is the cell membrane. The catalysed reaction is phosphate(out) + ATP + H2O = ADP + 2 phosphate(in) + H(+). Part of the ABC transporter complex PstSACB involved in phosphate import. Responsible for energy coupling to the transport system. In Streptococcus pyogenes serotype M18 (strain MGAS8232), this protein is Phosphate import ATP-binding protein PstB 2.